The primary structure comprises 51 residues: Large ribosomal subunit protein eL39 (51 aa).

This sequence belongs to the eukaryotic ribosomal protein eL39 family.

The protein is Large ribosomal subunit protein eL39 of Thermococcus sibiricus (strain DSM 12597 / MM 739).